The chain runs to 516 residues: Gastrula zinc finger protein XlCGF53.1 (516 aa).

Disordered stretches follow at residues M1–E33 and G200–P220. A compositionally biased stretch (polar residues) spans G200 to D218. 7 C2H2-type zinc fingers span residues Y312–H334, F354–H376, Y382–H404, F410–H432, Y438–H460, F466–H488, and F494–H516.

This sequence belongs to the krueppel C2H2-type zinc-finger protein family.

It is found in the nucleus. Functionally, may be involved in transcriptional regulation. The chain is Gastrula zinc finger protein XlCGF53.1 from Xenopus laevis (African clawed frog).